A 399-amino-acid polypeptide reads, in one-letter code: Tryptophan synthase beta chain (399 aa).

Lysine 92 carries the N6-(pyridoxal phosphate)lysine modification.

The protein belongs to the TrpB family. In terms of assembly, tetramer of two alpha and two beta chains. Requires pyridoxal 5'-phosphate as cofactor.

It carries out the reaction (1S,2R)-1-C-(indol-3-yl)glycerol 3-phosphate + L-serine = D-glyceraldehyde 3-phosphate + L-tryptophan + H2O. The protein operates within amino-acid biosynthesis; L-tryptophan biosynthesis; L-tryptophan from chorismate: step 5/5. In terms of biological role, the beta subunit is responsible for the synthesis of L-tryptophan from indole and L-serine. In Bordetella pertussis (strain Tohama I / ATCC BAA-589 / NCTC 13251), this protein is Tryptophan synthase beta chain.